A 340-amino-acid chain; its full sequence is Phosphoribosylformylglycinamidine cyclo-ligase (340 aa).

The protein belongs to the AIR synthase family.

Its subcellular location is the cytoplasm. It catalyses the reaction 2-formamido-N(1)-(5-O-phospho-beta-D-ribosyl)acetamidine + ATP = 5-amino-1-(5-phospho-beta-D-ribosyl)imidazole + ADP + phosphate + H(+). Its pathway is purine metabolism; IMP biosynthesis via de novo pathway; 5-amino-1-(5-phospho-D-ribosyl)imidazole from N(2)-formyl-N(1)-(5-phospho-D-ribosyl)glycinamide: step 2/2. The protein is Phosphoribosylformylglycinamidine cyclo-ligase of Streptococcus pyogenes serotype M2 (strain MGAS10270).